The primary structure comprises 312 residues: Envelope glycoprotein K (312 aa).

The first 20 residues, 1–20, serve as a signal peptide directing secretion; that stretch reads MLLGGRPLHLLVLGVMGAYA. Over 21–91 the chain is Extracellular; sequence GLGAYYATVA…VVYARRDCRA (71 aa). N-linked (GlcNAc...) asparagine; by host glycans are attached at residues Asn58 and Asn67. Residues 92–112 traverse the membrane as a helical segment; that stretch reads YLWDVHFRLAAVAWLLYAAFV. At 113–187 the chain is on the cytoplasmic side; it reads YARQERRMFG…DPITLAHRHP (75 aa). A helical membrane pass occupies residues 188–208; that stretch reads TLIALILLELGLRLGARMALF. The Extracellular portion of the chain corresponds to 209–227; it reads TTLGVTRAPCALVFPLYAR. A helical transmembrane segment spans residues 228–248; it reads ALVWIFVLAVGALELLAATLP. Residues 249–280 are Cytoplasmic-facing; that stretch reads HIARVSGATATPARSDGGRAALGVCGACCSTV. The chain crosses the membrane as a helical span at residues 281–301; the sequence is LAGIFAKALYLCLLVGGVLLF. Over 302–312 the chain is Extracellular; the sequence is LHYERHITIFG.

The protein belongs to the alphaherpesvirinae glycoprotein K family. As to quaternary structure, interacts (via UL20 interaction region) with protein UL20 homolog (via N-terminus); this interaction probably plays a role in the coordinate transport of protein UL20 homolog and gK to the trans-Golgi network (TGN), and is required for the cell surface expression of gK. N-glycosylated.

It is found in the host cell membrane. The protein localises to the host endosome membrane. The protein resides in the host Golgi apparatus membrane. Its function is as follows. Glycoprotein that probably modulates membrane fusion events during secondary envelopment of cytoplasmic capsids that bud into specific trans-Golgi network (TGN)-derived membranes. The sequence is that of Envelope glycoprotein K (gK) from Sus scrofa (Pig).